A 560-amino-acid chain; its full sequence is MRSDRIKKGFERAPHRSLLRATGLNDGDFEKPFIGIANSHIDIIPGHYYLQEYGRIAKDEIRKAGGVPFEFNTIGVDDGIAMGHEGMKYSLPSRELIADSIETVMNAHQLDALVCIPNCDKIVPGMLMGALRVNVPTVFVSGGPMKAGHLHDGTPIDLNTAFEAVGKRAQGQLTDAELYEIECQACPSGGSCSGMFTANSMNVLCEAMGVALPGNGTVLALTPEREALVRRAARRAVEIAADERFKLRNIANRDAIHNAMVVDMAMGGSSNTVLHMLAISREAGAPLSLRDIEEIAGKVSHIAKIAPSLATVHMEDIHRAGGVPAVLREAARRGGIVREGALTVTGETVGERIRDARTADPELIRPLENAYSPVGGLAVLFGNLAIEGAVVKTAGIQPSMRRFTGAAICFDSQDEAIAGIMGGKVKPGHFVVIRYEGPKGGPGMQEMLSPTSLIMGMGLGESVALVTDGRFSGATRGACVGHVSPEAAEGGVIGLVQDGDRITIDVEARALTVDVSDAELARRRAGFRPKRRDPGSSWLRRYAHLVTNAANGAVLRSTDL.

A Mg(2+)-binding site is contributed by aspartate 78. Cysteine 119 provides a ligand contact to [2Fe-2S] cluster. Mg(2+) contacts are provided by aspartate 120 and lysine 121. N6-carboxylysine is present on lysine 121. Residue cysteine 192 coordinates [2Fe-2S] cluster. Glutamate 446 serves as a coordination point for Mg(2+). Catalysis depends on serine 472, which acts as the Proton acceptor.

Belongs to the IlvD/Edd family. Homodimer. [2Fe-2S] cluster is required as a cofactor. The cofactor is Mg(2+).

It carries out the reaction (2R)-2,3-dihydroxy-3-methylbutanoate = 3-methyl-2-oxobutanoate + H2O. The catalysed reaction is (2R,3R)-2,3-dihydroxy-3-methylpentanoate = (S)-3-methyl-2-oxopentanoate + H2O. The protein operates within amino-acid biosynthesis; L-isoleucine biosynthesis; L-isoleucine from 2-oxobutanoate: step 3/4. It participates in amino-acid biosynthesis; L-valine biosynthesis; L-valine from pyruvate: step 3/4. Functions in the biosynthesis of branched-chain amino acids. Catalyzes the dehydration of (2R,3R)-2,3-dihydroxy-3-methylpentanoate (2,3-dihydroxy-3-methylvalerate) into 2-oxo-3-methylpentanoate (2-oxo-3-methylvalerate) and of (2R)-2,3-dihydroxy-3-methylbutanoate (2,3-dihydroxyisovalerate) into 2-oxo-3-methylbutanoate (2-oxoisovalerate), the penultimate precursor to L-isoleucine and L-valine, respectively. This chain is Dihydroxy-acid dehydratase, found in Anaeromyxobacter dehalogenans (strain 2CP-1 / ATCC BAA-258).